The primary structure comprises 356 residues: Phosphatidylglycerol--prolipoprotein diacylglyceryl transferase (356 aa).

4 helical membrane-spanning segments follow: residues 24–44 (IKWY…LACV), 59–79 (WFVF…SFII), 103–123 (LAIE…FPLV), and 144–164 (VSMW…QIIG). Arginine 165 is an a 1,2-diacyl-sn-glycero-3-phospho-(1'-sn-glycerol) binding site. Helical transmembrane passes span 209–229 (PFFL…YIGG) and 265–285 (FATS…LLVC).

The protein belongs to the Lgt family.

It localises to the cell membrane. It catalyses the reaction L-cysteinyl-[prolipoprotein] + a 1,2-diacyl-sn-glycero-3-phospho-(1'-sn-glycerol) = an S-1,2-diacyl-sn-glyceryl-L-cysteinyl-[prolipoprotein] + sn-glycerol 1-phosphate + H(+). The protein operates within protein modification; lipoprotein biosynthesis (diacylglyceryl transfer). Functionally, catalyzes the transfer of the diacylglyceryl group from phosphatidylglycerol to the sulfhydryl group of the N-terminal cysteine of a prolipoprotein, the first step in the formation of mature lipoproteins. This Malacoplasma penetrans (strain HF-2) (Mycoplasma penetrans) protein is Phosphatidylglycerol--prolipoprotein diacylglyceryl transferase.